Here is a 193-residue protein sequence, read N- to C-terminus: General stress protein 16U (193 aa).

This sequence belongs to the CAPAB/TerDEXZ family.

The polypeptide is General stress protein 16U (yceD) (Bacillus subtilis (strain 168)).